Consider the following 479-residue polypeptide: Ribosomal RNA small subunit methyltransferase F (479 aa).

S-adenosyl-L-methionine contacts are provided by residues 125 to 131 (AAAPGSK), Glu-149, Asp-176, and Asp-194. Catalysis depends on Cys-247, which acts as the Nucleophile.

The protein belongs to the class I-like SAM-binding methyltransferase superfamily. RsmB/NOP family.

Its subcellular location is the cytoplasm. The catalysed reaction is cytidine(1407) in 16S rRNA + S-adenosyl-L-methionine = 5-methylcytidine(1407) in 16S rRNA + S-adenosyl-L-homocysteine + H(+). Specifically methylates the cytosine at position 1407 (m5C1407) of 16S rRNA. The sequence is that of Ribosomal RNA small subunit methyltransferase F from Salmonella schwarzengrund (strain CVM19633).